A 336-amino-acid polypeptide reads, in one-letter code: Fructose-1,6-bisphosphatase class 1 (336 aa).

Positions 90, 112, 114, and 115 each coordinate Mg(2+). Substrate is bound by residues 115-118 (DGSS), Asn211, and Lys277. Glu283 provides a ligand contact to Mg(2+).

It belongs to the FBPase class 1 family. Homotetramer. Requires Mg(2+) as cofactor.

It is found in the cytoplasm. It catalyses the reaction beta-D-fructose 1,6-bisphosphate + H2O = beta-D-fructose 6-phosphate + phosphate. Its pathway is carbohydrate biosynthesis; gluconeogenesis. The chain is Fructose-1,6-bisphosphatase class 1 from Pseudomonas entomophila (strain L48).